A 139-amino-acid polypeptide reads, in one-letter code: Nucleoside diphosphate kinase (139 aa).

ATP is bound by residues Lys11, Phe59, Arg87, Thr93, Arg104, and Asn114. His117 acts as the Pros-phosphohistidine intermediate in catalysis.

This sequence belongs to the NDK family. As to quaternary structure, homotetramer. Mg(2+) is required as a cofactor.

It is found in the cytoplasm. The catalysed reaction is a 2'-deoxyribonucleoside 5'-diphosphate + ATP = a 2'-deoxyribonucleoside 5'-triphosphate + ADP. It catalyses the reaction a ribonucleoside 5'-diphosphate + ATP = a ribonucleoside 5'-triphosphate + ADP. In terms of biological role, major role in the synthesis of nucleoside triphosphates other than ATP. The ATP gamma phosphate is transferred to the NDP beta phosphate via a ping-pong mechanism, using a phosphorylated active-site intermediate. The chain is Nucleoside diphosphate kinase from Wolbachia sp. subsp. Brugia malayi (strain TRS).